A 410-amino-acid chain; its full sequence is Arginine deiminase (410 aa).

The Amidino-cysteine intermediate role is filled by Cys-400.

This sequence belongs to the arginine deiminase family.

Its subcellular location is the cytoplasm. The catalysed reaction is L-arginine + H2O = L-citrulline + NH4(+). The protein operates within amino-acid degradation; L-arginine degradation via ADI pathway; carbamoyl phosphate from L-arginine: step 1/2. This Streptococcus agalactiae serotype Ia (strain ATCC 27591 / A909 / CDC SS700) protein is Arginine deiminase.